A 395-amino-acid chain; its full sequence is tRNA-specific 2-thiouridylase MnmA (395 aa).

Residues 6–13 and leucine 32 contribute to the ATP site; that span reads AMSGGVDS. Cysteine 101 (nucleophile) is an active-site residue. Cysteine 101 and cysteine 193 are disulfide-bonded. Residue glycine 125 participates in ATP binding. Residues 143-145 form an interaction with tRNA region; the sequence is KDQ. The Cysteine persulfide intermediate role is filled by cysteine 193.

Belongs to the MnmA/TRMU family.

It localises to the cytoplasm. The catalysed reaction is S-sulfanyl-L-cysteinyl-[protein] + uridine(34) in tRNA + AH2 + ATP = 2-thiouridine(34) in tRNA + L-cysteinyl-[protein] + A + AMP + diphosphate + H(+). Its function is as follows. Catalyzes the 2-thiolation of uridine at the wobble position (U34) of tRNA, leading to the formation of s(2)U34. This is tRNA-specific 2-thiouridylase MnmA from Corynebacterium jeikeium (strain K411).